The following is a 752-amino-acid chain: Probable GTP-binding protein OBGC1, chloroplastic (752 aa).

The N-terminal 90 residues, 1-90, are a transit peptide targeting the chloroplast; the sequence is MAPAVAVVAA…RFPTANPEPR (90 aa). Residues 19–121 form a disordered region; that stretch reads FSAEARRNTK…EEDEVELGLR (103 aa). Residues 26 to 36 are compositionally biased toward basic residues; sequence NTKGSRSKRGS. Residues 103-117 show a composition bias toward acidic residues; it reads GDDEEDEEEEEDEVE. In terms of domain architecture, Obg spans 294-452; it reads MRCFDTAKIY…MWIDLELKLV (159 aa). Positions 453–621 constitute an OBG-type G domain; it reads ADVGIVGAPN…VVLAAYKVLQ (169 aa). Residues 459–466, 484–488, 506–509, 573–576, and 602–604 contribute to the GTP site; these read GAPNAGKS, FTTLL, DLPG, NKMD, and SAM. Positions 466 and 486 each coordinate Mg(2+). The 80-residue stretch at 649 to 728 folds into the OCT domain; the sequence is ERRAPMNEFE…VGEMEMVWTD (80 aa). The segment at 728 to 752 is disordered; it reads DEPSKTRSSKTMNSKDDSVRWPEFG. A compositionally biased stretch (basic and acidic residues) spans 740–752; it reads NSKDDSVRWPEFG.

This sequence belongs to the TRAFAC class OBG-HflX-like GTPase superfamily. OBG GTPase family. Mg(2+) serves as cofactor.

Its subcellular location is the plastid. The protein resides in the chloroplast. Its function is as follows. Probable GTP-binding protein that may play a role in chloroplast development. The chain is Probable GTP-binding protein OBGC1, chloroplastic (OBGC1) from Oryza sativa subsp. indica (Rice).